A 438-amino-acid polypeptide reads, in one-letter code: sn-glycerol-3-phosphate-binding periplasmic protein UgpB (438 aa).

Residues 1–23 form the signal peptide; that stretch reads MKPLRYTASALALGLALMANAQA. Sn-glycerol 3-phosphate contacts are provided by tyrosine 65, glutamate 89, serine 144, serine 270, glycine 307, tyrosine 346, and arginine 397.

This sequence belongs to the bacterial solute-binding protein 1 family. In terms of assembly, the complex is composed of two ATP-binding proteins (UgpC), two transmembrane proteins (UgpA and UgpE) and a solute-binding protein (UgpB).

It localises to the periplasm. Its function is as follows. Part of the ABC transporter complex UgpBAEC involved in sn-glycerol-3-phosphate (G3P) import. Binds G3P. The chain is sn-glycerol-3-phosphate-binding periplasmic protein UgpB (ugpB) from Escherichia coli O1:K1 / APEC.